Here is a 278-residue protein sequence, read N- to C-terminus: Cytidine kinase (278 aa).

ATP is bound at residue 203–208 (TRGEKG). The active-site Proton acceptor is the Asp237.

The protein belongs to the carbohydrate kinase PfkB family. The cofactor is Mg(2+).

It carries out the reaction cytidine + ATP = CMP + ADP + H(+). Involved in nucleoside degradation. Phosphorylates cytidine to CMP. Can also act on deoxycytidine and uridine, but is most active with cytidine. ATP is the most preferred phosphate donor, but it can also use GTP, CTP or UTP. This is Cytidine kinase from Thermococcus kodakarensis (strain ATCC BAA-918 / JCM 12380 / KOD1) (Pyrococcus kodakaraensis (strain KOD1)).